A 356-amino-acid polypeptide reads, in one-letter code: Putative mitogen-activated protein kinase 14C (356 aa).

The Protein kinase domain occupies Tyr20–Leu305. ATP contacts are provided by residues Leu26–Val34 and Lys49. The active-site Proton acceptor is Asp147. Phosphothreonine is present on Thr177.

Belongs to the protein kinase superfamily. CMGC Ser/Thr protein kinase family. MAP kinase subfamily. The cofactor is Mg(2+). In terms of processing, the phosphorylation on Thr-177 activates the enzyme. A conserved Tyr, which must also be phosphorylated to activate the enzyme in closely related sequences, is replaced by His-179 in this sequence.

It catalyses the reaction L-seryl-[protein] + ATP = O-phospho-L-seryl-[protein] + ADP + H(+). It carries out the reaction L-threonyl-[protein] + ATP = O-phospho-L-threonyl-[protein] + ADP + H(+). Kinase involved in a signal transduction pathway. The chain is Putative mitogen-activated protein kinase 14C (p38c) from Drosophila melanogaster (Fruit fly).